The primary structure comprises 370 residues: GTPase Obg (370 aa).

Positions 1 to 159 (MKFIDEARIE…RMLRLELKVL (159 aa)) constitute an Obg domain. Positions 160 to 334 (ADVGLLGMPN…LCYAIYDYLA (175 aa)) constitute an OBG-type G domain. Residues 166–173 (GMPNAGKS), 191–195 (FTTLA), 213–216 (DIPG), 284–287 (NKLD), and 315–317 (SAL) each bind GTP. The Mg(2+) site is built by Ser173 and Thr193. The disordered stretch occupies residues 344-370 (EEEDLATDVRFRDAPPADGGATPGDDA).

Belongs to the TRAFAC class OBG-HflX-like GTPase superfamily. OBG GTPase family. Monomer. Mg(2+) is required as a cofactor.

It is found in the cytoplasm. Functionally, an essential GTPase which binds GTP, GDP and possibly (p)ppGpp with moderate affinity, with high nucleotide exchange rates and a fairly low GTP hydrolysis rate. Plays a role in control of the cell cycle, stress response, ribosome biogenesis and in those bacteria that undergo differentiation, in morphogenesis control. The chain is GTPase Obg from Burkholderia ambifaria (strain ATCC BAA-244 / DSM 16087 / CCUG 44356 / LMG 19182 / AMMD) (Burkholderia cepacia (strain AMMD)).